A 405-amino-acid chain; its full sequence is L-rhamnonate dehydratase (405 aa).

Residues H33 and R59 each coordinate substrate. D226, E252, and E280 together coordinate Mg(2+). H329 serves as the catalytic Proton acceptor. E349 contributes to the substrate binding site.

Belongs to the mandelate racemase/muconate lactonizing enzyme family. RhamD subfamily. In terms of assembly, homooctamer; tetramer of dimers. Mg(2+) serves as cofactor.

It carries out the reaction L-rhamnonate = 2-dehydro-3-deoxy-L-rhamnonate + H2O. Functionally, catalyzes the dehydration of L-rhamnonate to 2-keto-3-deoxy-L-rhamnonate (KDR). This is L-rhamnonate dehydratase from Salmonella paratyphi C (strain RKS4594).